The primary structure comprises 271 residues: Formamidopyrimidine-DNA glycosylase (271 aa).

Proline 2 serves as the catalytic Schiff-base intermediate with DNA. Residue glutamate 3 is the Proton donor of the active site. The active-site Proton donor; for beta-elimination activity is lysine 57. 3 residues coordinate DNA: histidine 90, arginine 109, and lysine 151. The segment at 236 to 270 (HVYGRGGETCTECGHLLSEIRLGQRTTVFCSLCQT) adopts an FPG-type zinc-finger fold. The Proton donor; for delta-elimination activity role is filled by arginine 260.

It belongs to the FPG family. Monomer. It depends on Zn(2+) as a cofactor.

The enzyme catalyses Hydrolysis of DNA containing ring-opened 7-methylguanine residues, releasing 2,6-diamino-4-hydroxy-5-(N-methyl)formamidopyrimidine.. The catalysed reaction is 2'-deoxyribonucleotide-(2'-deoxyribose 5'-phosphate)-2'-deoxyribonucleotide-DNA = a 3'-end 2'-deoxyribonucleotide-(2,3-dehydro-2,3-deoxyribose 5'-phosphate)-DNA + a 5'-end 5'-phospho-2'-deoxyribonucleoside-DNA + H(+). Functionally, involved in base excision repair of DNA damaged by oxidation or by mutagenic agents. Acts as a DNA glycosylase that recognizes and removes damaged bases. Has a preference for oxidized purines, such as 7,8-dihydro-8-oxoguanine (8-oxoG). Has AP (apurinic/apyrimidinic) lyase activity and introduces nicks in the DNA strand. Cleaves the DNA backbone by beta-delta elimination to generate a single-strand break at the site of the removed base with both 3'- and 5'-phosphates. In Shewanella amazonensis (strain ATCC BAA-1098 / SB2B), this protein is Formamidopyrimidine-DNA glycosylase.